The sequence spans 142 residues: Large ribosomal subunit protein uL11 (142 aa).

This sequence belongs to the universal ribosomal protein uL11 family. In terms of assembly, part of the ribosomal stalk of the 50S ribosomal subunit. Interacts with L10 and the large rRNA to form the base of the stalk. L10 forms an elongated spine to which L12 dimers bind in a sequential fashion forming a multimeric L10(L12)X complex. In terms of processing, one or more lysine residues are methylated.

Its function is as follows. Forms part of the ribosomal stalk which helps the ribosome interact with GTP-bound translation factors. This is Large ribosomal subunit protein uL11 from Hahella chejuensis (strain KCTC 2396).